The sequence spans 546 residues: MAWLETFTYICGWLILSSCLLVRAQLDSDGTITIEEQIVLVMKAKMQCELNITAQLQEGEGNCFPEWDGIICWPRGTVGKMSAVPCPPYVYDFNHKGVAFRHCTPNGTWDSIHGSNKTWANYSDCFLQPDINIGKQEFFESLYILYTVGYSISFGSLAVAILIIGYFRRLHCTRNYIHLHLFVSFMLRAMSIFVKDRVAQAHLGVEALQSLVMQGDLQNFIGGPSVDKSQYVGCKIAVVMFIYFLATNYYWILVEGLYLHNLIFVSFFSDTKYLWGFISIGWGFPAVFVVAWAVARATLADTRCWELSAGDRWIYQAPILAAIGLNFILFLNTVRVLATKIWETNAVGHDMRKQYRKLAKSTLVLVLVFGVHYIVFVCQPHSFSGLWWEIRMHCELFFNSFQGFFVSIVYCYCNGEVQAEVKKMWTRWNLSIDWKRAPPCGGQRYGSVLTTVTHSTSSQSQMGASTRLVLISGKPTKNACRQIDSHVTLPGYVWSSSEQDCQTHSPPEETKEGHRRQGDDSPVMESSRPVAFTLDTEGCKGETHPI.

The N-terminal stretch at 1-24 (MAWLETFTYICGWLILSSCLLVRA) is a signal peptide. Over 27-143 (DSDGTITIEE…GKQEFFESLY (117 aa)) the chain is Extracellular. N-linked (GlcNAc...) asparagine glycans are attached at residues N51, N106, N116, and N121. The helical transmembrane segment at 144-167 (ILYTVGYSISFGSLAVAILIIGYF) threads the bilayer. Residues 168–174 (RRLHCTR) lie on the Cytoplasmic side of the membrane. The helical transmembrane segment at 175–194 (NYIHLHLFVSFMLRAMSIFV) threads the bilayer. Residues 195–235 (KDRVAQAHLGVEALQSLVMQGDLQNFIGGPSVDKSQYVGCK) are Extracellular-facing. The chain crosses the membrane as a helical span at residues 236 to 258 (IAVVMFIYFLATNYYWILVEGLY). At 259-273 (LHNLIFVSFFSDTKY) the chain is on the cytoplasmic side. A helical membrane pass occupies residues 274 to 295 (LWGFISIGWGFPAVFVVAWAVA). The Extracellular portion of the chain corresponds to 296 to 313 (RATLADTRCWELSAGDRW). Residues 314–334 (IYQAPILAAIGLNFILFLNTV) traverse the membrane as a helical segment. Topologically, residues 335 to 361 (RVLATKIWETNAVGHDMRKQYRKLAKS) are cytoplasmic. A helical transmembrane segment spans residues 362–380 (TLVLVLVFGVHYIVFVCQP). Residues 381 to 391 (HSFSGLWWEIR) lie on the Extracellular side of the membrane. The helical transmembrane segment at 392–414 (MHCELFFNSFQGFFVSIVYCYCN) threads the bilayer. Residues 415-546 (GEVQAEVKKM…EGCKGETHPI (132 aa)) are Cytoplasmic-facing. A disordered region spans residues 497–546 (SEQDCQTHSPPEETKEGHRRQGDDSPVMESSRPVAFTLDTEGCKGETHPI). 2 stretches are compositionally biased toward basic and acidic residues: residues 506 to 519 (PPEE…RQGD) and 537 to 546 (EGCKGETHPI).

The protein belongs to the G-protein coupled receptor 2 family. Binds to TIPF39/TIP39.

It localises to the cell membrane. Functionally, this is a specific receptor for parathyroid hormone. The activity of this receptor is mediated by G proteins which activate adenylyl cyclase. PTH2R may be responsible for PTH effects in a number of physiological systems. It may play a significant role in pancreatic function. PTH2R presence in neurons indicates that it may function as a neurotransmitter receptor. This Mus musculus (Mouse) protein is Parathyroid hormone 2 receptor (Pth2r).